The following is a 551-amino-acid chain: Oleuropein beta-glucosidase (551 aa).

A compositionally biased stretch (polar residues) spans 1-27; sequence MDIQSNVLTITSGSTPTDTSSNGQAAK. A disordered region spans residues 1–33; sequence MDIQSNVLTITSGSTPTDTSSNGQAAKSTKERI. Residues Gln-52, His-156, 201–202, Tyr-363, Glu-433, Trp-482, 489–490, and Phe-498 contribute to the a beta-D-glucoside site; these read NE and EW. Glu-202 (proton donor) is an active-site residue. The active-site Nucleophile is Glu-433. A required for the homomultimerization region spans residues 502–551; that stretch reads YVDYANGRYTRLPKRSAVWWRNFLTKPTAVPLKNEPEKSEDRRKRLRGST. Residues 532 to 551 form a disordered region; it reads PLKNEPEKSEDRRKRLRGST. Basic and acidic residues predominate over residues 535–544; sequence NEPEKSEDRR. The Nuclear localization signal motif lies at 542 to 550; the sequence is DRRKRLRGS.

Belongs to the glycosyl hydrolase 1 family. As to quaternary structure, homomultimer. Native form of the enzyme requires at least an octamer conformation. In terms of tissue distribution, expressed in expanding leaves and in young drupes, mostly in the developing seed coat tissues, the perisperm and the mesocarp. Also detected in shoot and root meristems, flower buds, developing ovaries and tapetal cells of the anther. Not detected in embryos or endosperm, or in leaf trichomes.

It localises to the nucleus. The enzyme catalyses oleuropein + H2O = oleuropein aglycone + D-glucose. Its function is as follows. Major beta-glucosidase activating oleuropein into a potent protein cross-linking agent. No activity with rutin, luteolin or p-nitrophenyl-beta-glucopyranoside as substrates. The chain is Oleuropein beta-glucosidase from Olea europaea (Common olive).